A 345-amino-acid chain; its full sequence is Holliday junction branch migration complex subunit RuvB (345 aa).

The segment at 1–182 (MDQRIIASSS…FGIVQRLEFY (182 aa)) is large ATPase domain (RuvB-L). ATP is bound by residues I21, R22, G63, K66, T67, T68, 129–131 (EDF), R172, Y182, and R219. T67 contributes to the Mg(2+) binding site. A small ATPAse domain (RuvB-S) region spans residues 183 to 253 (SPQELTRIVI…VAQAAMQMLK (71 aa)). The interval 256-345 (PEGFDELDRR…PGIGEPGDLF (90 aa)) is head domain (RuvB-H). DNA is bound by residues R292, R311, and R316.

This sequence belongs to the RuvB family. In terms of assembly, homohexamer. Forms an RuvA(8)-RuvB(12)-Holliday junction (HJ) complex. HJ DNA is sandwiched between 2 RuvA tetramers; dsDNA enters through RuvA and exits via RuvB. An RuvB hexamer assembles on each DNA strand where it exits the tetramer. Each RuvB hexamer is contacted by two RuvA subunits (via domain III) on 2 adjacent RuvB subunits; this complex drives branch migration. In the full resolvosome a probable DNA-RuvA(4)-RuvB(12)-RuvC(2) complex forms which resolves the HJ.

It is found in the cytoplasm. It catalyses the reaction ATP + H2O = ADP + phosphate + H(+). In terms of biological role, the RuvA-RuvB-RuvC complex processes Holliday junction (HJ) DNA during genetic recombination and DNA repair, while the RuvA-RuvB complex plays an important role in the rescue of blocked DNA replication forks via replication fork reversal (RFR). RuvA specifically binds to HJ cruciform DNA, conferring on it an open structure. The RuvB hexamer acts as an ATP-dependent pump, pulling dsDNA into and through the RuvAB complex. RuvB forms 2 homohexamers on either side of HJ DNA bound by 1 or 2 RuvA tetramers; 4 subunits per hexamer contact DNA at a time. Coordinated motions by a converter formed by DNA-disengaged RuvB subunits stimulates ATP hydrolysis and nucleotide exchange. Immobilization of the converter enables RuvB to convert the ATP-contained energy into a lever motion, pulling 2 nucleotides of DNA out of the RuvA tetramer per ATP hydrolyzed, thus driving DNA branch migration. The RuvB motors rotate together with the DNA substrate, which together with the progressing nucleotide cycle form the mechanistic basis for DNA recombination by continuous HJ branch migration. Branch migration allows RuvC to scan DNA until it finds its consensus sequence, where it cleaves and resolves cruciform DNA. The protein is Holliday junction branch migration complex subunit RuvB of Xanthomonas oryzae pv. oryzae (strain MAFF 311018).